Reading from the N-terminus, the 294-residue chain is UDP-3-O-acyl-N-acetylglucosamine deacetylase (294 aa).

The Zn(2+) site is built by histidine 75, histidine 232, and aspartate 236. Histidine 259 functions as the Proton donor in the catalytic mechanism.

It belongs to the LpxC family. Requires Zn(2+) as cofactor.

It catalyses the reaction a UDP-3-O-[(3R)-3-hydroxyacyl]-N-acetyl-alpha-D-glucosamine + H2O = a UDP-3-O-[(3R)-3-hydroxyacyl]-alpha-D-glucosamine + acetate. The protein operates within glycolipid biosynthesis; lipid IV(A) biosynthesis; lipid IV(A) from (3R)-3-hydroxytetradecanoyl-[acyl-carrier-protein] and UDP-N-acetyl-alpha-D-glucosamine: step 2/6. In terms of biological role, catalyzes the hydrolysis of UDP-3-O-myristoyl-N-acetylglucosamine to form UDP-3-O-myristoylglucosamine and acetate, the committed step in lipid A biosynthesis. The protein is UDP-3-O-acyl-N-acetylglucosamine deacetylase of Campylobacter jejuni subsp. jejuni serotype O:23/36 (strain 81-176).